The chain runs to 126 residues: Large ribosomal subunit protein uL22 (126 aa).

This sequence belongs to the universal ribosomal protein uL22 family. As to quaternary structure, part of the 50S ribosomal subunit.

This protein binds specifically to 23S rRNA; its binding is stimulated by other ribosomal proteins, e.g. L4, L17, and L20. It is important during the early stages of 50S assembly. It makes multiple contacts with different domains of the 23S rRNA in the assembled 50S subunit and ribosome. In terms of biological role, the globular domain of the protein is located near the polypeptide exit tunnel on the outside of the subunit, while an extended beta-hairpin is found that lines the wall of the exit tunnel in the center of the 70S ribosome. This Ruegeria sp. (strain TM1040) (Silicibacter sp.) protein is Large ribosomal subunit protein uL22.